The sequence spans 505 residues: Sodium/sialic acid symporter NanT (505 aa).

Helical transmembrane passes span 9–29 (LNYI…VYFA), 45–65 (IPGW…ITFM), 80–100 (IGQY…IPFF), 128–148 (FMLF…LALM), and 155–175 (PLMI…LGGI). Na(+) is bound at residue alanine 56. Threonine 58 contacts N-acetyl-alpha-neuraminate. Leucine 59 is a Na(+) binding site. Residues serine 60, threonine 63, glutamine 82, and arginine 135 each coordinate N-acetyl-alpha-neuraminate. Aspartate 182 contacts Na(+). Helical transmembrane passes span 183-203 (VIQG…ICFN), 227-247 (FSWS…FFAS), 280-300 (LVAC…AYYT), and 318-338 (FYVI…AIFA). Na(+) contacts are provided by alanine 339, serine 342, serine 343, serine 345, and serine 346. 4 helical membrane passes run 378-398 (TLTV…IMSN), 406-426 (FNSL…LGIF), 435-455 (ALLG…ATDL), and 457-477 (FFFY…LTAP).

This sequence belongs to the sodium:solute symporter (SSF) (TC 2.A.21) family.

It is found in the cell inner membrane. The catalysed reaction is N-acetyl-alpha-neuraminate(out) + 2 Na(+)(out) = N-acetyl-alpha-neuraminate(in) + 2 Na(+)(in). In terms of biological role, symporter that uses the Na(+) gradient as the driving force for the uptake of the sialic acid N-acetylneuraminic acid (Neu5Ac). Might play a role in persistence after colonization. This chain is Sodium/sialic acid symporter NanT, found in Aliivibrio fischeri (strain ATCC 700601 / ES114) (Vibrio fischeri).